A 321-amino-acid polypeptide reads, in one-letter code: Lipoyl synthase (321 aa).

[4Fe-4S] cluster-binding residues include Cys68, Cys73, Cys79, Cys94, Cys98, Cys101, and Ser308. The 218-residue stretch at 80-297 folds into the Radical SAM core domain; sequence FNHGTATFMI…KEQALAMGFT (218 aa).

This sequence belongs to the radical SAM superfamily. Lipoyl synthase family. [4Fe-4S] cluster is required as a cofactor.

The protein resides in the cytoplasm. It catalyses the reaction [[Fe-S] cluster scaffold protein carrying a second [4Fe-4S](2+) cluster] + N(6)-octanoyl-L-lysyl-[protein] + 2 oxidized [2Fe-2S]-[ferredoxin] + 2 S-adenosyl-L-methionine + 4 H(+) = [[Fe-S] cluster scaffold protein] + N(6)-[(R)-dihydrolipoyl]-L-lysyl-[protein] + 4 Fe(3+) + 2 hydrogen sulfide + 2 5'-deoxyadenosine + 2 L-methionine + 2 reduced [2Fe-2S]-[ferredoxin]. It functions in the pathway protein modification; protein lipoylation via endogenous pathway; protein N(6)-(lipoyl)lysine from octanoyl-[acyl-carrier-protein]: step 2/2. Its function is as follows. Catalyzes the radical-mediated insertion of two sulfur atoms into the C-6 and C-8 positions of the octanoyl moiety bound to the lipoyl domains of lipoate-dependent enzymes, thereby converting the octanoylated domains into lipoylated derivatives. This Proteus mirabilis (strain HI4320) protein is Lipoyl synthase.